The chain runs to 609 residues: Glutamine--fructose-6-phosphate aminotransferase [isomerizing] (609 aa).

Catalysis depends on Cys-2, which acts as the Nucleophile; for GATase activity. The Glutamine amidotransferase type-2 domain maps to 2–218; the sequence is CGIVGAIAQR…EGDIAEITRR (217 aa). 2 consecutive SIS domains span residues 286-426 and 458-599; these read ADEL…LKGL and LAED…VDQP. Lys-604 acts as the For Fru-6P isomerization activity in catalysis.

As to quaternary structure, homodimer.

The protein resides in the cytoplasm. It catalyses the reaction D-fructose 6-phosphate + L-glutamine = D-glucosamine 6-phosphate + L-glutamate. Functionally, catalyzes the first step in hexosamine metabolism, converting fructose-6P into glucosamine-6P using glutamine as a nitrogen source. In Shigella flexneri, this protein is Glutamine--fructose-6-phosphate aminotransferase [isomerizing].